Here is a 426-residue protein sequence, read N- to C-terminus: Serine--tRNA ligase (426 aa).

Residue 233 to 235 coordinates L-serine; that stretch reads TAE. 264–266 is an ATP binding site; sequence RSE. Glutamate 287 serves as a coordination point for L-serine. 351–354 serves as a coordination point for ATP; it reads EISS. Serine 387 contributes to the L-serine binding site.

Belongs to the class-II aminoacyl-tRNA synthetase family. Type-1 seryl-tRNA synthetase subfamily. As to quaternary structure, homodimer. The tRNA molecule binds across the dimer.

It localises to the cytoplasm. It catalyses the reaction tRNA(Ser) + L-serine + ATP = L-seryl-tRNA(Ser) + AMP + diphosphate + H(+). The enzyme catalyses tRNA(Sec) + L-serine + ATP = L-seryl-tRNA(Sec) + AMP + diphosphate + H(+). The protein operates within aminoacyl-tRNA biosynthesis; selenocysteinyl-tRNA(Sec) biosynthesis; L-seryl-tRNA(Sec) from L-serine and tRNA(Sec): step 1/1. Its function is as follows. Catalyzes the attachment of serine to tRNA(Ser). Is also able to aminoacylate tRNA(Sec) with serine, to form the misacylated tRNA L-seryl-tRNA(Sec), which will be further converted into selenocysteinyl-tRNA(Sec). This chain is Serine--tRNA ligase, found in Clostridium botulinum (strain Loch Maree / Type A3).